The sequence spans 401 residues: MTERIVLAYSGGLDTSVAIGWIGEATGAEVIAVAVDVGQGGESLETIRQRALGCGAVEAYVADARDEFANEYAMPTLKANALYQGHYPLVSAISRPVIVKHLVKAAREFGATTVAHGCTGKGNDQVRFEVGIQTLGPDLKCIAPVRDLALTRDKAIAFAEEKGLPIETTKKNPYSIDQNVWGRAVETGYLEDIWNAPTKDIYDYTATPEFPPAPDEVIISFQAGVPVAIDGVKVTPLQAIQELNRRAGAQGVGRIDVVEDRLVGIKSREIYEAPGAMALITAHKHLEDITIEREQARFKATVGQRWAELVYDGQWFSPLKRSLDAFIEDTQQYVSGDIRMVLHGGQAVVNGRRSETSLYDFDLATYDTGDTFDQSMARGFIELWGMSSKVASGRDLRVAGQ.

An ATP-binding site is contributed by 8–16 (AYSGGLDTS). Tyrosine 87 serves as a coordination point for L-citrulline. Residue glycine 117 coordinates ATP. Residues threonine 119, asparagine 123, and aspartate 124 each coordinate L-aspartate. Asparagine 123 contributes to the L-citrulline binding site. L-citrulline-binding residues include arginine 127, serine 175, glutamate 259, and tyrosine 271.

Belongs to the argininosuccinate synthase family. Type 1 subfamily. Homotetramer.

It is found in the cytoplasm. The enzyme catalyses L-citrulline + L-aspartate + ATP = 2-(N(omega)-L-arginino)succinate + AMP + diphosphate + H(+). The protein operates within amino-acid biosynthesis; L-arginine biosynthesis; L-arginine from L-ornithine and carbamoyl phosphate: step 2/3. The polypeptide is Argininosuccinate synthase (Paenarthrobacter aurescens (strain TC1)).